The chain runs to 436 residues: Prenyltransferase nscD (436 aa).

It belongs to the tryptophan dimethylallyltransferase family.

It functions in the pathway secondary metabolite biosynthesis. Functionally, prenyltransferase; part of the gene cluster that mediates the biosynthesis of neosartoricin B, a prenylated anthracenone that probably exhibits T-cell antiproliferative activity, suggestive of a physiological role as an immunosuppressive agent. The non-reducing polyketide synthase nscA probably synthesizes and cyclizes the decaketide backbone. The hydrolase nscB then mediates the product release through hydrolysis followed by spontaneous decarboxylation. The prenyltransferase nscD catalyzes the addition of the dimethylallyl group to the aromatic C5. The FAD-dependent monooxygenase nscC is then responsible for the stereospecific hydroxylation at C2. Neosartoricin B can be converted into two additional compounds neosartoricins C and D. Neosartoricin C is a spirocyclic compound that is cyclized through the attack of C3 hydroxyl on C14, followed by dehydration. On the other hand, neosartoricin D is a further cyclized compound in which attack of C2 on C14 in neosartoricin C results in the formation of the acetal-containing dioxabicyclo-octanone ring. Both of these compounds are novel and possibly represent related metabolites of the gene cluster. In Trichophyton tonsurans (strain CBS 112818) (Scalp ringworm fungus), this protein is Prenyltransferase nscD.